A 139-amino-acid chain; its full sequence is Transcription antitermination protein NusB (139 aa).

The protein belongs to the NusB family.

Involved in transcription antitermination. Required for transcription of ribosomal RNA (rRNA) genes. Binds specifically to the boxA antiterminator sequence of the ribosomal RNA (rrn) operons. The chain is Transcription antitermination protein NusB from Klebsiella pneumoniae (strain 342).